Here is a 463-residue protein sequence, read N- to C-terminus: Elongation factor 1-alpha (463 aa).

The 238-residue stretch at 5–242 (KVHINIVVIG…DSIIPPQRPT (238 aa)) folds into the tr-type G domain. Residues 14 to 21 (GHVDSGKS) are G1. 14–21 (GHVDSGKS) contributes to the GTP binding site. The segment at 70 to 74 (GITID) is G2. Residues 91 to 94 (DAPG) are G3. GTP-binding positions include 91 to 95 (DAPGH) and 153 to 156 (NKMD). Positions 153-156 (NKMD) are G4. Residues 194 to 196 (SGF) form a G5 region. A 5-glutamyl glycerylphosphorylethanolamine mark is found at glutamate 301 and glutamate 374. The disordered stretch occupies residues 443–463 (KSDGSSGKVTKSAQKAAPKKK). Over residues 446 to 455 (GSSGKVTKSA) the composition is skewed to polar residues.

Belongs to the TRAFAC class translation factor GTPase superfamily. Classic translation factor GTPase family. EF-Tu/EF-1A subfamily.

Its subcellular location is the cytoplasm. This protein promotes the GTP-dependent binding of aminoacyl-tRNA to the A-site of ribosomes during protein biosynthesis. This is Elongation factor 1-alpha from Caenorhabditis elegans.